We begin with the raw amino-acid sequence, 276 residues long: Undecaprenyl-diphosphatase (276 aa).

The next 7 helical transmembrane spans lie at 48–68, 92–112, 119–139, 155–175, 196–216, 229–249, and 255–275; these read AANSFKVVIQLGSILAVAIVF, LTIAQIAVGLVPAAVLGFLFE, LFSVRTVAYGLIAGAVLMLIA, ITYKQAFCVGLFQCLALWPGF, ADFTFIMAIPIMAGASLLKLV, FFLVGFICAFVVALLVVKFFL, and IKLVPFAIYRVILGIILIMLV.

Belongs to the UppP family.

The protein localises to the cell membrane. The catalysed reaction is di-trans,octa-cis-undecaprenyl diphosphate + H2O = di-trans,octa-cis-undecaprenyl phosphate + phosphate + H(+). In terms of biological role, catalyzes the dephosphorylation of undecaprenyl diphosphate (UPP). Confers resistance to bacitracin. This Bacillus velezensis (strain DSM 23117 / BGSC 10A6 / LMG 26770 / FZB42) (Bacillus amyloliquefaciens subsp. plantarum) protein is Undecaprenyl-diphosphatase.